Here is a 374-residue protein sequence, read N- to C-terminus: uncharacterized protein (374 aa).

Residues 1 to 13 are compositionally biased toward basic and acidic residues; the sequence is METKYHEYDDVQT. 3 disordered regions span residues 1 to 20, 91 to 193, and 236 to 374; these read METKYHEYDDVQTKDTPSNK, SPMT…PLNQ, and KINN…SDFE. The segment covering 95-155 has biased composition (low complexity); sequence NNNNNNNNNN…NNSSNNNNNN (61 aa). The span at 166-193 shows a compositional bias: polar residues; it reads ISSNQSSPLSIYSTPPNPSSYVSSPLNQ. A compositionally biased stretch (pro residues) spans 242–262; that stretch reads APPPPPKACAPPPPPPPPPPI. The span at 277–300 shows a compositional bias: low complexity; that stretch reads NNNNNNNNNNNSSNTNDSNNTNNT.

This is an uncharacterized protein from Dictyostelium discoideum (Social amoeba).